We begin with the raw amino-acid sequence, 1041 residues long: Collagen alpha-2(I) chain (1041 aa).

Residues 1-1041 (SGGFDFSFLP…FGYEGDFYRA (1041 aa)) form a disordered region. 4-hydroxyproline is present on residues Pro10, Pro13, Pro39, and Pro45. 2 stretches are compositionally biased toward low complexity: residues 25–45 (LGPGPMGLMGPRGPPGASGAP) and 55–76 (EPGEPGQTGPAGARGPAGPPGK). Positions 77-91 (AGEDGHPGKPGRPGE) are enriched in basic and acidic residues. Lys113 carries the post-translational modification 5-hydroxylysine; alternate. O-linked (Gal...) hydroxylysine; alternate glycosylation occurs at Lys113. 2 stretches are compositionally biased toward low complexity: residues 174–189 (SVGPVGPAGPIGSAGP) and 235–256 (PGANGLTGAKGAAGLPGVAGAP). A compositionally biased stretch (gly residues) spans 290-299 (GESGGKGEPG). Over residues 300-310 (SAGPQGPPGSS) the composition is skewed to low complexity. A compositionally biased stretch (gly residues) spans 332 to 341 (GLRGGPGSRG). Residues 354–370 (PAGARGASGPAGVRGPS) are compositionally biased toward low complexity. 4-hydroxyproline occurs at positions 376 and 379. Residues 405–424 (LPGIDGRPGPIGPAGARGEA) show a composition bias toward low complexity. Residues 466–475 (GVQGGKGEQG) are compositionally biased toward gly residues. 2 stretches are compositionally biased toward low complexity: residues 522–539 (SGESGAVGPSGAIGSRGP) and 551–561 (EPGVVGAPGTA). Over residues 562–571 (GPAGSGGLPG) the composition is skewed to gly residues. Low complexity-rich tracts occupy residues 594–638 (VGTT…PRGS) and 645–665 (VGPAGPNGFAGPAGAAGQPGA). The segment covering 666-675 (KGERGTKGPK) has biased composition (basic and acidic residues). Positions 683–693 (PTGPVGSAGPA) are enriched in low complexity. Residues 703 to 712 (GSRGDGGPPG) are compositionally biased toward gly residues. Low complexity predominate over residues 714 to 723 (TGFPGAAGRT). A compositionally biased stretch (gly residues) spans 754 to 768 (GPVGRGETGAGGPPG). Composition is skewed to low complexity over residues 769 to 803 (FTGEKGPSGEPGTAGPPGTAGPQGLLGAPGILGLP) and 811 to 821 (LPGVAGAVGEP). Positions 822-840 (GPLGIGPPGARGPSGGVPG) are enriched in gly residues. Composition is skewed to low complexity over residues 874–887 (YAGNPGPVGAAGAP) and 903–918 (EPGPVGSAGPVGALGP). Residues 928–939 (RGDKGEAGDKGP) are compositionally biased toward basic and acidic residues. Residues 1013–1023 (PAGPPGPPGPP) are compositionally biased toward pro residues.

This sequence belongs to the fibrillar collagen family. Trimers of one alpha 2(I) and two alpha 1(I) chains. Interacts (via C-terminus) with TMEM131 (via PapD-L domain); the interaction is direct and is involved in assembly and TRAPPIII ER-to-Golgi transport complex-dependent secretion of collagen. In terms of processing, prolines at the third position of the tripeptide repeating unit (G-X-Y) are hydroxylated in some or all of the chains. Expressed in bones.

It is found in the secreted. Its subcellular location is the extracellular space. The protein localises to the extracellular matrix. In terms of biological role, type I collagen is a member of group I collagen (fibrillar forming collagen). This chain is Collagen alpha-2(I) chain, found in Paramylodon harlani (Harlan's ground sloth).